Here is a 208-residue protein sequence, read N- to C-terminus: CASP-like protein 3A1 (208 aa).

2 stretches are compositionally biased toward polar residues: residues 1-11 (MGSFANGQNGS) and 17-33 (TPAT…TTSA). The interval 1-33 (MGSFANGQNGSELGIQTPATGSNAALEPPTTSA) is disordered. At 1 to 43 (MGSFANGQNGSELGIQTPATGSNAALEPPTTSAAAPRCPRLGM) the chain is on the cytoplasmic side. A helical membrane pass occupies residues 44 to 64 (AMVAARAAALVMALLSVSLMV). Residues 65–92 (SAKQRGTLAIFGIEIPLYAKWSLSDSLQ) lie on the Extracellular side of the membrane. A helical transmembrane segment spans residues 93–113 (SLVGISAAAAAYSLAQLLSIA). Residues 114–128 (HTALKKAPVVPSRRY) are Cytoplasmic-facing. Residues 129 to 149 (AWMLLAGDQVFAYAMLSAGSA) form a helical membrane-spanning segment. Residues 150–183 (AAAVANLNRTGVRHTALPNFCKPLPRFCDLSAAS) lie on the Extracellular side of the membrane. N-linked (GlcNAc...) asparagine glycosylation occurs at Asn-157. A helical transmembrane segment spans residues 184–204 (IACAFLGCAFLAASAVIDVIW). The Cytoplasmic portion of the chain corresponds to 205-208 (LSRL).

It belongs to the Casparian strip membrane proteins (CASP) family. In terms of assembly, homodimer and heterodimers.

Its subcellular location is the cell membrane. The sequence is that of CASP-like protein 3A1 from Hordeum vulgare subsp. vulgare (Domesticated barley).